The sequence spans 415 residues: Serine hydroxymethyltransferase (415 aa).

(6S)-5,6,7,8-tetrahydrofolate contacts are provided by residues Leu117 and 121–123 (GHL). At Lys226 the chain carries N6-(pyridoxal phosphate)lysine.

The protein belongs to the SHMT family. In terms of assembly, homodimer. Pyridoxal 5'-phosphate serves as cofactor.

It is found in the cytoplasm. It catalyses the reaction (6R)-5,10-methylene-5,6,7,8-tetrahydrofolate + glycine + H2O = (6S)-5,6,7,8-tetrahydrofolate + L-serine. It functions in the pathway one-carbon metabolism; tetrahydrofolate interconversion. Its pathway is amino-acid biosynthesis; glycine biosynthesis; glycine from L-serine: step 1/1. Catalyzes the reversible interconversion of serine and glycine with tetrahydrofolate (THF) serving as the one-carbon carrier. This reaction serves as the major source of one-carbon groups required for the biosynthesis of purines, thymidylate, methionine, and other important biomolecules. Also exhibits THF-independent aldolase activity toward beta-hydroxyamino acids, producing glycine and aldehydes, via a retro-aldol mechanism. In Dehalococcoides mccartyi (strain CBDB1), this protein is Serine hydroxymethyltransferase.